A 148-amino-acid polypeptide reads, in one-letter code: Small ribosomal subunit protein uS9 (148 aa).

The protein belongs to the universal ribosomal protein uS9 family.

The protein is Small ribosomal subunit protein uS9 (RpS16) of Drosophila melanogaster (Fruit fly).